The following is a 441-amino-acid chain: Signal recognition particle 54 kDa protein (441 aa).

GTP contacts are provided by residues 103–110 (GVQGSGKT), 184–188 (DTAGR), and 244–247 (TKMD).

Belongs to the GTP-binding SRP family. SRP54 subfamily. Part of the signal recognition particle protein translocation system, which is composed of SRP and FtsY. Archaeal SRP consists of a 7S RNA molecule of 300 nucleotides and two protein subunits: SRP54 and SRP19.

The protein resides in the cytoplasm. It catalyses the reaction GTP + H2O = GDP + phosphate + H(+). Its function is as follows. Involved in targeting and insertion of nascent membrane proteins into the cytoplasmic membrane. Binds to the hydrophobic signal sequence of the ribosome-nascent chain (RNC) as it emerges from the ribosomes. The SRP-RNC complex is then targeted to the cytoplasmic membrane where it interacts with the SRP receptor FtsY. This Aeropyrum pernix (strain ATCC 700893 / DSM 11879 / JCM 9820 / NBRC 100138 / K1) protein is Signal recognition particle 54 kDa protein.